A 137-amino-acid polypeptide reads, in one-letter code: MSYGGSASQDIVTKLIRKIQNTSVSCTRRDENLDSFNQHLKMSLKVAHNTKTFAKHCLHRQVFKNTYRKRKAVEDQRKNLNTQLRQKFASPSDNLLSPCSRKLNDHKSKLFSAKSQPKTLEFVRGKQNIPRKPNVDI.

Functionally, component of the FEAR (CDC14 early anaphase release) network which promotes CDC14 release from the nucleolus during early anaphase and is required for the efficient segregation of telomeric and nucleolar regions. Although BNS1 can partially compensate for a lack of SPO12 function when overexpressed, it does not appear to play any role in controlling meiotic nuclear division. In Saccharomyces cerevisiae (strain ATCC 204508 / S288c) (Baker's yeast), this protein is Protein BNS1 (BNS1).